Consider the following 305-residue polypeptide: Ribonuclease BN (305 aa).

Zn(2+)-binding residues include His64, His66, Asp68, His69, His141, Asp212, and His270. The active-site Proton acceptor is the Asp68.

This sequence belongs to the RNase Z family. RNase BN subfamily. In terms of assembly, homodimer. Zn(2+) serves as cofactor.

Its function is as follows. Zinc phosphodiesterase, which has both exoribonuclease and endoribonuclease activities. In Escherichia coli O81 (strain ED1a), this protein is Ribonuclease BN.